A 752-amino-acid chain; its full sequence is Complement C2 (752 aa).

Residues 1–20 (MGPLMVLFCLLFLYPGLADS) form the signal peptide. Sushi domains are found at residues 22 to 86 (PSCP…VCKP), 87 to 146 (VRCP…VCDN), and 149 to 206 (GHCP…ICRQ). 6 cysteine pairs are disulfide-bonded: Cys24–Cys64, Cys51–Cys84, Cys89–Cys131, Cys117–Cys144, Cys151–Cys191, and Cys177–Cys204. Residue Asn29 is glycosylated (N-linked (GlcNAc...) asparagine). Asn112 carries N-linked (GlcNAc...) asparagine glycosylation. A VWFA domain is found at 254-452 (NLYLLLDCSQ…KALHQVFEHM (199 aa)). The short motif at 260 to 264 (DCSQS) is the MIDAS-like motif element. Mg(2+) contacts are provided by Ser262 and Ser264. Asn290 and Asn333 each carry an N-linked (GlcNAc...) asparagine glycan. Position 337 (Thr337) interacts with Mg(2+). 3 disulfides stabilise this stretch: Cys463/Cys581, Cys492/Cys508, and Cys584/Cys600. Residues 464–744 (GVGNMSANAS…MQPWLRQHLG (281 aa)) enclose the Peptidase S1 domain. Asn467 and Asn471 each carry an N-linked (GlcNAc...) asparagine glycan. Residues His507 and Asp561 each act as charge relay system in the active site. Asn621 and Asn651 each carry an N-linked (GlcNAc...) asparagine glycan. Intrachain disulfides connect Cys638-Cys665 and Cys675-Cys705. Residue Ser679 is the Charge relay system of the active site.

It belongs to the peptidase S1 family. As to quaternary structure, serine protease component of the C3 convertase, also named C4bC2b, composed of the serine protease complement C2b and complement C4b. Serine protease component of the C5 convertase, also named C4bC2bC3b, composed of the serine protease complement C2b, complement C3b, as well as complement C4b. Requires Mg(2+) as cofactor. It depends on Mn(2+) as a cofactor. Cleaved and activated by different proteases depending on the complement pathway to generate complement C2a and serine protease complement C2b chains. Cleaved and activated by C1S following activation by the classical complement system. Cleaved and activated by MASP2 following activation by the lectin complement system. Cleaved and activated by GZMK following activation by the GZMK complement system.

The protein resides in the secreted. The protein localises to the cell surface. The catalysed reaction is Selective cleavage of Arg-|-Ser bond in complement component C3 alpha-chain to form C3a and C3b, and Arg-|-Xaa bond in complement component C5 alpha-chain to form C5a and C5b.. Its function is as follows. Precursor of the catalytic component of the C3 and C5 convertase complexes, which are part of the complement pathway, a cascade of proteins that leads to phagocytosis and breakdown of pathogens and signaling that strengthens the adaptive immune system. Component C2 is part of the classical, lectin and GZMK complement systems. Catalytic component of the complement C3 and C5 convertase complexes. Following complement activation, recruited to the surface of pathogens by complement C4b opsonin to form the C3 convertase, or C3b and C4b opsonins to form the C5 convertase. As part of the C3 convertase, cleaves and activate C3 into C3a anaphylatoxin and C3b opsonin, the next components of the complement pathways. As part of the C5 convertase, cleaves and activate C5 into C5a anaphylatoxin and C5b component of the membrane attack complex. This Pan troglodytes (Chimpanzee) protein is Complement C2.